Here is a 476-residue protein sequence, read N- to C-terminus: Sulfate adenylyltransferase subunit 1 (476 aa).

The 220-residue stretch at 24-243 folds into the tr-type G domain; that stretch reads KSLLRFLTCG…VDVEKEKEAG (220 aa). The segment at 33-40 is G1; the sequence is GSVDDGKS. GTP is bound at residue 33–40; the sequence is GSVDDGKS. A G2 region spans residues 91–95; that stretch reads GITID. The G3 stretch occupies residues 112-115; sequence DTPG. Residues 112–116 and 167–170 each bind GTP; these read DTPGH and NKMD. Positions 167-170 are G4; the sequence is NKMD. A G5 region spans residues 205–207; that stretch reads SAL.

This sequence belongs to the TRAFAC class translation factor GTPase superfamily. Classic translation factor GTPase family. CysN/NodQ subfamily. Heterodimer composed of CysD, the smaller subunit, and CysN.

The catalysed reaction is sulfate + ATP + H(+) = adenosine 5'-phosphosulfate + diphosphate. The protein operates within sulfur metabolism; hydrogen sulfide biosynthesis; sulfite from sulfate: step 1/3. Its function is as follows. With CysD forms the ATP sulfurylase (ATPS) that catalyzes the adenylation of sulfate producing adenosine 5'-phosphosulfate (APS) and diphosphate, the first enzymatic step in sulfur assimilation pathway. APS synthesis involves the formation of a high-energy phosphoric-sulfuric acid anhydride bond driven by GTP hydrolysis by CysN coupled to ATP hydrolysis by CysD. This is Sulfate adenylyltransferase subunit 1 from Vibrio vulnificus (strain YJ016).